A 201-amino-acid polypeptide reads, in one-letter code: Large ribosomal subunit protein bL9 (201 aa).

The segment covering 150-165 (EAERQAAGEDLTQRRD) has biased composition (basic and acidic residues). The interval 150 to 201 (EAERQAAGEDLTQRRDDEEEEAVEAAEFFESEELAPGDEEEEAAGEEEDAKE) is disordered. Acidic residues predominate over residues 166-201 (DEEEEAVEAAEFFESEELAPGDEEEEAAGEEEDAKE).

Belongs to the bacterial ribosomal protein bL9 family.

In terms of biological role, binds to the 23S rRNA. In Parvibaculum lavamentivorans (strain DS-1 / DSM 13023 / NCIMB 13966), this protein is Large ribosomal subunit protein bL9.